The chain runs to 315 residues: MNYLDFESKIKEIEDKITSLSHVFEDEKTEVEIKKLSKKRLELMESTYSKLTDWQVVQLSRHPDRPYFKDLLPLIFTDFQELHGDRTFGDDLAVIGGLAKLNNKPVMVIGQEKGRDTKSKIKHNFGMMHPEGYRKALRLMKLAEKFNMPVVTFIDTPGAYPGIKAEERGQSEAIARNLLEMSALKVPVVCIVIGEGCSGGALGIGVGDRLLMLQYSYFATISPEGCASILHKTAEKASEVTQMMNITSGRLKELKIVDEVIPEPLGGAHRDYETTATNIRKAVAAELKILSEMTVEQRNSRRYDKLMSFGRFKEA.

Residues 36–289 (LSKKRLELME…RKAVAAELKI (254 aa)) form the CoA carboxyltransferase C-terminal domain.

This sequence belongs to the AccA family. Acetyl-CoA carboxylase is a heterohexamer composed of biotin carboxyl carrier protein (AccB), biotin carboxylase (AccC) and two subunits each of ACCase subunit alpha (AccA) and ACCase subunit beta (AccD).

The protein localises to the cytoplasm. It carries out the reaction N(6)-carboxybiotinyl-L-lysyl-[protein] + acetyl-CoA = N(6)-biotinyl-L-lysyl-[protein] + malonyl-CoA. It participates in lipid metabolism; malonyl-CoA biosynthesis; malonyl-CoA from acetyl-CoA: step 1/1. Its function is as follows. Component of the acetyl coenzyme A carboxylase (ACC) complex. First, biotin carboxylase catalyzes the carboxylation of biotin on its carrier protein (BCCP) and then the CO(2) group is transferred by the carboxyltransferase to acetyl-CoA to form malonyl-CoA. This Francisella tularensis subsp. tularensis (strain FSC 198) protein is Acetyl-coenzyme A carboxylase carboxyl transferase subunit alpha.